A 265-amino-acid polypeptide reads, in one-letter code: uncharacterized protein (265 aa).

Positions 233 to 265 (STACGSDQRPTRLPRASCSSRSISGSAARPWKR) are disordered. The segment covering 247–265 (RASCSSRSISGSAARPWKR) has biased composition (low complexity).

This is an uncharacterized protein from Escherichia coli.